The chain runs to 227 residues: Ribose-5-phosphate isomerase A (227 aa).

Substrate contacts are provided by residues 26 to 29 (TGST), 82 to 85 (DGAD), and 95 to 98 (KGGG). The active-site Proton acceptor is Glu-104. Substrate is bound at residue Lys-122.

The protein belongs to the ribose 5-phosphate isomerase family. In terms of assembly, homodimer.

It carries out the reaction aldehydo-D-ribose 5-phosphate = D-ribulose 5-phosphate. The protein operates within carbohydrate degradation; pentose phosphate pathway; D-ribose 5-phosphate from D-ribulose 5-phosphate (non-oxidative stage): step 1/1. Catalyzes the reversible conversion of ribose-5-phosphate to ribulose 5-phosphate. This is Ribose-5-phosphate isomerase A from Streptococcus equi subsp. equi (strain 4047).